A 119-amino-acid polypeptide reads, in one-letter code: Autophagy-related protein 8C-like (119 aa).

Residue G117 is the site of Phosphatidylethanolamine amidated glycine attachment. A propeptide spans 118–119 (SF) (removed in mature form).

The protein belongs to the ATG8 family. In terms of assembly, interacts with ATG4. Interacts with the Phytophtora infestans effector PexRD54. Interacts with JOKA2. The C-terminal 2 residues are removed by ATG4 to expose Gly-117 at the C-terminus. The C-terminal Gly is then amidated with phosphatidylethanolamine by an activating system similar to that for ubiquitin. The phosphatidylethanolamine amidated glycine is required for autophagosome formation.

The protein localises to the cytoplasmic vesicle. It is found in the autophagosome membrane. It localises to the vacuole membrane. The protein resides in the cytoplasm. Its subcellular location is the cytoskeleton. Its function is as follows. Ubiquitin-like modifier involved in autophagosomes formation. May mediate the delivery of the autophagosomes to the vacuole via the microtubule cytoskeleton. ATG8CL-mediated selective autophagy contributes to defense against the fungal pathogen Phytophtora infestans. The protein is Autophagy-related protein 8C-like of Solanum tuberosum (Potato).